The following is a 67-amino-acid chain: Large ribosomal subunit protein uL29 (67 aa).

Belongs to the universal ribosomal protein uL29 family.

This chain is Large ribosomal subunit protein uL29, found in Staphylothermus marinus (strain ATCC 43588 / DSM 3639 / JCM 9404 / F1).